Here is a 437-residue protein sequence, read N- to C-terminus: Xylose isomerase (437 aa).

Residues His101 and Asp104 contribute to the active site. 7 residues coordinate Mg(2+): Glu232, Glu268, His271, Asp296, Asp307, Asp309, and Asp339.

Belongs to the xylose isomerase family. Homotetramer. It depends on Mg(2+) as a cofactor.

It is found in the cytoplasm. The catalysed reaction is alpha-D-xylose = alpha-D-xylulofuranose. The chain is Xylose isomerase from Mannheimia succiniciproducens (strain KCTC 0769BP / MBEL55E).